The sequence spans 146 residues: MORN repeat-containing protein 4 (146 aa).

4 MORN repeats span residues 16 to 38 (YRGE…DGGT), 39 to 61 (YLGH…DGSR), 62 to 84 (YEGE…DNMT), and 85 to 107 (FEGE…DGSH).

As to quaternary structure, interacts with MYO3A.

The protein resides in the cytoplasm. It localises to the cell projection. It is found in the filopodium tip. The protein localises to the stereocilium. In terms of biological role, plays a role in promoting axonal degeneration following neuronal injury by toxic insult or trauma. The protein is MORN repeat-containing protein 4 (MORN4) of Homo sapiens (Human).